We begin with the raw amino-acid sequence, 741 residues long: Type VI secretion system spike protein VgrG1b (741 aa).

Composition is skewed to polar residues over residues 614–629 (SIGANRSESVGNNETI) and 649–663 (GNQSTSIGKNESRSV). Residues 614-678 (SIGANRSESV…TSVGKDDSLD (65 aa)) are disordered.

The protein belongs to the VgrG protein family.

The protein localises to the secreted. Its function is as follows. Part of the H1 type VI secretion system (H1-T6SS) specialized secretion system, which delivers several virulence factors in both prokaryotic and eukaryotic cells during infection. Allows the delivery of the Tse7 toxin to target cells where it exerts toxicity through its nuclease domain. The protein is Type VI secretion system spike protein VgrG1b of Pseudomonas aeruginosa (strain ATCC 15692 / DSM 22644 / CIP 104116 / JCM 14847 / LMG 12228 / 1C / PRS 101 / PAO1).